Consider the following 499-residue polypeptide: Cytochrome P450 11B1, mitochondrial (499 aa).

Residues 1–24 (MALRVTADVWLARPWQCLHRTRAL) constitute a mitochondrion transit peptide. Cysteine 446 is a binding site for heme.

This sequence belongs to the cytochrome P450 family. Requires heme as cofactor. Adrenal zona fasciculata/reticularis.

Its subcellular location is the mitochondrion inner membrane. The enzyme catalyses a steroid + 2 reduced [adrenodoxin] + O2 + 2 H(+) = an 11beta-hydroxysteroid + 2 oxidized [adrenodoxin] + H2O. The catalysed reaction is 21-hydroxyprogesterone + 2 reduced [adrenodoxin] + O2 + 2 H(+) = corticosterone + 2 oxidized [adrenodoxin] + H2O. It catalyses the reaction 21-hydroxyprogesterone + 2 reduced [adrenodoxin] + O2 + 2 H(+) = 18-hydroxy-11-deoxycorticosterone + 2 oxidized [adrenodoxin] + H2O. It carries out the reaction 21-hydroxyprogesterone + 2 reduced [adrenodoxin] + O2 + 2 H(+) = 19-hydroxy-11-deoxycorticosterone + 2 oxidized [adrenodoxin] + H2O. The enzyme catalyses 11-deoxycortisol + 2 reduced [adrenodoxin] + O2 + 2 H(+) = cortisol + 2 oxidized [adrenodoxin] + H2O. The catalysed reaction is cortisol + 2 reduced [adrenodoxin] + O2 + 2 H(+) = 18-hydroxycortisol + 2 oxidized [adrenodoxin] + H2O. It catalyses the reaction 11-deoxycortisol + 2 reduced [adrenodoxin] + O2 + 2 H(+) = 18-hydroxy-11-deoxycortisol + 2 oxidized [adrenodoxin] + H2O. The protein operates within steroid biosynthesis; glucocorticoid biosynthesis. Its pathway is steroid hormone biosynthesis. Functionally, a cytochrome P450 monooxygenase involved in the biosynthesis of adrenal corticoids. Catalyzes a variety of reactions that are essential for many species, including detoxification, defense, and the formation of endogenous chemicals like steroid hormones. Steroid 11beta, 18- and 19-hydroxylase with preferred regioselectivity at 11beta, then 18, and lastly 19. Catalyzes the hydroxylation of 11-deoxycortisol and 11-deoxycorticosterone (21-hydroxyprogesterone) at 11beta position, yielding cortisol or corticosterone, respectively, but cannot produce aldosterone. Mechanistically, uses molecular oxygen inserting one oxygen atom into a substrate for hydroxylation and reducing the second into a water molecule. Two electrons are provided by NADPH via a two-protein mitochondrial transfer system comprising flavoprotein FDXR (adrenodoxin/ferredoxin reductase) and nonheme iron-sulfur protein FDX1 or FDX2 (adrenodoxin/ferredoxin). Due to its lack of 18-oxidation activity, it is incapable of generating aldosterone. Could also be involved in the androgen metabolic pathway. This is Cytochrome P450 11B1, mitochondrial (Cyp11b1) from Rattus norvegicus (Rat).